The primary structure comprises 368 residues: Endophilin-A2 (368 aa).

The segment at 1-21 (MSVAGLKKQFYKASQLVSEKV) is membrane-binding amphipathic helix. One can recognise a BAR domain in the interval 18-249 (SEKVGGAEGT…LKRRMREASS (232 aa)). Residues 60–87 (PNPASRAKLTMLNTVSKIRGQVKNPGYP) form a required for dimerization upon membrane association region. Positions 145 to 250 (NLCEKDLKEI…KRRMREASSR (106 aa)) form a coiled coil. An interaction with ARC region spans residues 218 to 254 (LVDAQLDYHRQAVQILDELAEKLKRRMREASSRPKRE). Positions 244–308 (MREASSRPKR…PSRSMPPLDQ (65 aa)) are disordered. A compositionally biased stretch (basic and acidic residues) spans 245–263 (REASSRPKREYKPKPREPF). Serine 288 and serine 292 each carry phosphoserine. Threonine 298 carries the post-translational modification Phosphothreonine. The SH3 domain maps to 306-365 (LDQPSCKALYDFEPENDGELGFHEGDVITLTNQIDENWYEGMLDGQSGFFPLSYVEVLVP). The residue at position 315 (tyrosine 315) is a Phosphotyrosine.

The protein belongs to the endophilin family. As to quaternary structure, interacts with ARC. Interacts with SYNJ1 and DNM1. Interacts with PDCD6IP. Interacts with BIN2. Ubiquitous. Higher expression in pancreas, placenta, prostate, testis and uterus.

It localises to the cytoplasm. Its subcellular location is the early endosome membrane. The protein resides in the cell projection. The protein localises to the podosome. In terms of biological role, implicated in endocytosis. May recruit other proteins to membranes with high curvature. The chain is Endophilin-A2 (SH3GL1) from Homo sapiens (Human).